The following is a 202-amino-acid chain: Glycerol-3-phosphate acyltransferase (202 aa).

A run of 5 helical transmembrane segments spans residues 3–23, 87–107, 118–138, 144–164, and 167–187; these read NLIIYAFIYLLSSIPFGLILA, LLWSVAVLAILGHCFSIYLLF, GAMIVLLPLEVLTAFIVWVVI, ISSLASLAALLAFVVSSFIFN, and LEIHTHAPVFIIAFIIVYKHL.

This sequence belongs to the PlsY family. In terms of assembly, probably interacts with PlsX.

The protein localises to the cell inner membrane. The catalysed reaction is an acyl phosphate + sn-glycerol 3-phosphate = a 1-acyl-sn-glycero-3-phosphate + phosphate. It participates in lipid metabolism; phospholipid metabolism. Its function is as follows. Catalyzes the transfer of an acyl group from acyl-phosphate (acyl-PO(4)) to glycerol-3-phosphate (G3P) to form lysophosphatidic acid (LPA). This enzyme utilizes acyl-phosphate as fatty acyl donor, but not acyl-CoA or acyl-ACP. The chain is Glycerol-3-phosphate acyltransferase from Campylobacter jejuni (strain RM1221).